Consider the following 619-residue polypeptide: Dihydroxy-acid dehydratase 1 (619 aa).

Residue D81 coordinates Mg(2+). C122 contributes to the [2Fe-2S] cluster binding site. 2 residues coordinate Mg(2+): D123 and K124. At K124 the chain carries N6-carboxylysine. C198 lines the [2Fe-2S] cluster pocket. E494 lines the Mg(2+) pocket. The active-site Proton acceptor is S520.

The protein belongs to the IlvD/Edd family. As to quaternary structure, homodimer. It depends on [2Fe-2S] cluster as a cofactor. Requires Mg(2+) as cofactor.

It catalyses the reaction (2R)-2,3-dihydroxy-3-methylbutanoate = 3-methyl-2-oxobutanoate + H2O. The enzyme catalyses (2R,3R)-2,3-dihydroxy-3-methylpentanoate = (S)-3-methyl-2-oxopentanoate + H2O. It functions in the pathway amino-acid biosynthesis; L-isoleucine biosynthesis; L-isoleucine from 2-oxobutanoate: step 3/4. It participates in amino-acid biosynthesis; L-valine biosynthesis; L-valine from pyruvate: step 3/4. Functionally, functions in the biosynthesis of branched-chain amino acids. Catalyzes the dehydration of (2R,3R)-2,3-dihydroxy-3-methylpentanoate (2,3-dihydroxy-3-methylvalerate) into 2-oxo-3-methylpentanoate (2-oxo-3-methylvalerate) and of (2R)-2,3-dihydroxy-3-methylbutanoate (2,3-dihydroxyisovalerate) into 2-oxo-3-methylbutanoate (2-oxoisovalerate), the penultimate precursor to L-isoleucine and L-valine, respectively. The chain is Dihydroxy-acid dehydratase 1 from Bordetella pertussis (strain Tohama I / ATCC BAA-589 / NCTC 13251).